Consider the following 151-residue polypeptide: Ribosomal RNA large subunit methyltransferase H (151 aa).

S-adenosyl-L-methionine is bound by residues Leu-70, Gly-99, and 118–123; that span reads LSKLTF.

Belongs to the RNA methyltransferase RlmH family. As to quaternary structure, homodimer.

It localises to the cytoplasm. It catalyses the reaction pseudouridine(1915) in 23S rRNA + S-adenosyl-L-methionine = N(3)-methylpseudouridine(1915) in 23S rRNA + S-adenosyl-L-homocysteine + H(+). Specifically methylates the pseudouridine at position 1915 (m3Psi1915) in 23S rRNA. The sequence is that of Ribosomal RNA large subunit methyltransferase H from Gloeobacter violaceus (strain ATCC 29082 / PCC 7421).